Consider the following 912-residue polypeptide: WD repeat-containing protein 44 (912 aa).

Over residues 1-14 (MASESDTEEFFDAP) the composition is skewed to acidic residues. Residues 1–25 (MASESDTEEFFDAPEDVHLEGGDPI) are disordered. Ala-2 is subject to N-acetylalanine. A binding activity region spans residues 2-170 (ASESDTEEFF…SSTAQLNVPE (169 aa)). Ser-3 is modified (phosphoserine). Positions 9 to 15 (EFFDAPE) match the FFAT-like motif motif. A phosphoserine mark is found at Ser-50, Ser-66, Ser-71, Ser-81, Ser-96, and Ser-126. Disordered regions lie at residues 79–104 (DDSLDSKGKGQSDQATASPVTAGTEL) and 118–152 (QEDSQKAESQDVSEETELESKQCFPSDDTCEKPVD). A compositionally biased stretch (polar residues) spans 89-104 (QSDQATASPVTAGTEL). Thr-158 bears the Phosphothreonine mark. Disordered stretches follow at residues 183-202 (VKESDVLESASSHSLSTKDF), 207-279 (EVAP…PKEN), 318-349 (QENGKAPDGQTIAGEVMGPQRPRSNSGRELTD), 396-422 (SNDAAQSDDEEKLQSQQTDTDGGRLKQ), and 457-479 (RDEVFHTDQDDPSSSDDEGMPYT). Residues 210–256 (PAKPPRQLTPEPDIVASTKKPVPARPPPPANFPPPRPPPPSRPAPPP) are important for interaction with ARHGAP26 AND ARHGAP10. Thr-218 carries the post-translational modification Phosphothreonine. Residues 232–255 (PARPPPPANFPPPRPPPPSRPAPP) are compositionally biased toward pro residues. A Phosphoserine modification is found at Ser-261. Over residues 261 to 277 (SELEFEALKTPDLDVPK) the composition is skewed to basic and acidic residues. Position 270 is a phosphothreonine (Thr-270). The segment at 333-346 (VMGPQRPRSNSGRE) is important for interaction with RAB11A. The tract at residues 334–504 (MGPQRPRSNS…DFDQIKVVQD (171 aa)) is interaction with RAB11. Phosphoserine is present on residues Ser-341 and Ser-343. Thr-348 carries the phosphothreonine modification. A phosphoserine mark is found at Ser-402, Ser-469, Ser-470, and Ser-471. Acidic residues predominate over residues 466–475 (DDPSSSDDEG). The residue at position 478 (Tyr-478) is a Phosphotyrosine. A WD 1 repeat occupies 508–547 (EHMGAVWTMKFSHCGRLLASAGQDNVVRIWALKNAFDYFN). The disordered stretch occupies residues 556-592 (EGRVSPSPSQESLNSSKSDTDTGVCSGTDEDPDDKNA). 2 positions are modified to phosphoserine: Ser-560 and Ser-564. Residues 560–572 (SPSPSQESLNSSK) show a composition bias toward low complexity. 6 WD repeats span residues 604 to 642 (GHTADLLDLSWSKNYFLLSSSMDKTVRLWHISRRECLCC), 644 to 684 (QHID…VALW), 689 to 728 (GQTKLITAANFCQNGKYAVIGTYDGRCIFYDTEHLKYHTQ), 739 to 778 (KVGRKITGIEPLPGENKILVTSNDSRIRLYDLRDLSLSMK), 783 to 822 (VNSSSQIKASFSHDFNYLVSGSEDKYVYIWSTYHDLSKFT), and 871 to 912 (EDAE…KNLS).

Interacts with the GTP-bound form of RAB11A when membrane-associated. Interacts with GRAF1/ARHGAP26 or GRAF2/ARHGAP10; the interaction connects the endoplasmic reticulum (ER) with the endosomal tubule. Interacts (via FFAT-like motif) with VAPA (via MSP domain) or VAPB (via MSP domain); the interaction connects the ER with the endosomal tubule. Does not bind to other Rab and Rho small G proteins. In terms of processing, phosphorylated by ATK1; the phosphorylation stabilizes its interaction with RAB11A and RAB11B. In terms of tissue distribution, highly expressed in brain.

The protein resides in the cytoplasm. It localises to the cytosol. It is found in the perinuclear region. The protein localises to the endosome membrane. Its subcellular location is the golgi apparatus. The protein resides in the trans-Golgi network. Downstream effector for Rab11 which regulates Rab11 intracellular membrane trafficking functions such as endocytic recycling, intracellular ciliogenesis and protein export. ATK1-mediated phosphorylation of WDR44 induces binding to Rab11 which activates endocytic recycling of transferrin receptor back to the plasma membrane. When bound to Rab11, prevents the formation of the ciliogenic Rab11-Rabin8/RAB3IP-RAB11FIP3 complex, therefore inhibiting preciliary trafficking and ciliogenesis. Participates in neo-synthesized protein export by connecting the endoplasmic reticulum (ER) with the endosomal tubule via direct interactions with the integral ER proteins VAPA or VAPB and the endosomal protein GRAFs (GRAF1/ARHGAP26 or GRAF2/ARHGAP10), which facilitates the transfer of proteins such as E-cadherin, MPP14 and CFTR into a Rab8-Rab10-Rab11-dependent export route. This Bos taurus (Bovine) protein is WD repeat-containing protein 44 (WDR44).